Reading from the N-terminus, the 221-residue chain is Ribonuclease S-2 (221 aa).

A signal peptide spans 1–20 (MIYIFTMVFSLNVLILSSSA). Residue Gln-31 participates in RNA binding. Cys-37 and Cys-44 are oxidised to a cystine. RNA contacts are provided by residues His-55, 91 to 92 (NV), Phe-101, 104 to 105 (KQ), and 108 to 109 (KH). His-55 acts as the Proton donor in catalysis. Cys-70 and Cys-112 are joined by a disulfide. An N-linked (GlcNAc...) asparagine glycan is attached at Asn-91. Residue Gln-105 is part of the active site. His-109 serves as the catalytic Proton acceptor. 3 N-linked (GlcNAc...) asparagine glycosylation sites follow: Asn-137, Asn-153, and Asn-195. Disulfide bonds link Cys-176–Cys-214 and Cys-191–Cys-202.

The protein belongs to the RNase T2 family. N-linked core structure at Asn-91, Asn-137, and Asn-153 contains xylose and at Asn-195 contains xylose and fucose.

The protein localises to the secreted. It is found in the extracellular space. It carries out the reaction a ribonucleotidyl-ribonucleotide-RNA + H2O = a 3'-end 3'-phospho-ribonucleotide-RNA + a 5'-end dephospho-ribonucleoside-RNA + H(+). Its function is as follows. Self-incompatibility (SI) is the inherited ability of a flowering plant to prevent self-fertilization by discriminating between self and non-self pollen during pollination. In many species, self-incompatibility is controlled by the single, multiallelic locus S. In Pyrus pyrifolia (Chinese pear), this protein is Ribonuclease S-2.